Here is a 285-residue protein sequence, read N- to C-terminus: Probable enoyl-CoA hydratase echA12 (285 aa).

This sequence belongs to the enoyl-CoA hydratase/isomerase family.

The enzyme catalyses a (3S)-3-hydroxyacyl-CoA = a (2E)-enoyl-CoA + H2O. It catalyses the reaction a 4-saturated-(3S)-3-hydroxyacyl-CoA = a (3E)-enoyl-CoA + H2O. In terms of biological role, could possibly oxidize fatty acids using specific components. This Mycobacterium tuberculosis (strain CDC 1551 / Oshkosh) protein is Probable enoyl-CoA hydratase echA12 (echA12).